Consider the following 623-residue polypeptide: DNA-directed RNA polymerase subunit beta' (623 aa).

The Zn(2+) site is built by cysteine 70, cysteine 72, cysteine 85, and cysteine 88. Mg(2+)-binding residues include aspartate 466, aspartate 468, and aspartate 470.

The protein belongs to the RNA polymerase beta' chain family. RpoC1 subfamily. As to quaternary structure, in plastids the minimal PEP RNA polymerase catalytic core is composed of four subunits: alpha, beta, beta', and beta''. When a (nuclear-encoded) sigma factor is associated with the core the holoenzyme is formed, which can initiate transcription. Mg(2+) serves as cofactor. The cofactor is Zn(2+).

The protein resides in the plastid. It localises to the chloroplast. It carries out the reaction RNA(n) + a ribonucleoside 5'-triphosphate = RNA(n+1) + diphosphate. Functionally, DNA-dependent RNA polymerase catalyzes the transcription of DNA into RNA using the four ribonucleoside triphosphates as substrates. The chain is DNA-directed RNA polymerase subunit beta' from Guillardia theta (Cryptophyte).